A 585-amino-acid chain; its full sequence is Frizzled-5 (585 aa).

Positions 1–26 (MARPDPSAPPSLLLLLLAQLVGRAAA) are cleaved as a signal peptide. At 27 to 238 (ASKAPVCQEI…PDERTFATFW (212 aa)) the chain is on the extracellular side. In terms of domain architecture, FZ spans 28–150 (SKAPVCQEIT…GDAEVLCMDY (123 aa)). Cystine bridges form between Cys33/Cys94, Cys41/Cys87, Cys78/Cys116, Cys105/Cys147, and Cys109/Cys133. The N-linked (GlcNAc...) asparagine glycan is linked to Asn47. An N-linked (GlcNAc...) asparagine glycan is attached at Asn151. Residues 156-182 (TTASPKSFPAKPTLPGPPGAPSSGGEC) are disordered. A helical transmembrane segment spans residues 239 to 259 (IGLWSVLCFISTSTTVATFLI). The Cytoplasmic segment spans residues 260 to 270 (DMERFRYPERP). The helical transmembrane segment at 271-291 (IIFLSACYLCVSLGFLVRLVV) threads the bilayer. Over 292–315 (GHASVACSREHSHIHYETTGPALC) the chain is Extracellular. A helical membrane pass occupies residues 316–336 (TVVFLLVYFFGMASSIWWVIL). Residues 337 to 358 (SLTWFLAAGMKWGNEAIAGYAQ) are Cytoplasmic-facing. A helical membrane pass occupies residues 359 to 379 (YFHLAAWLIPSVKSITALALS). Over 380 to 402 (SVDGDPVAGVCYVGNQNLNSLRG) the chain is Extracellular. Residues 403–423 (FVLGPLVLYLLVGTLFLLAGF) form a helical membrane-spanning segment. The Cytoplasmic segment spans residues 424 to 449 (VSLFRIRSVIKQGGTKTDKLEKLMIR). The chain crosses the membrane as a helical span at residues 450-470 (IGIFTLLYTVPASIVVACYLY). At 471-500 (EQHYRESWEAALTCACPGSDAGQPRAKPEY) the chain is on the extracellular side. The helical transmembrane segment at 501 to 521 (WVLMLKYFMCLVVGITSGVWI) threads the bilayer. Topologically, residues 522–585 (WSGKTLESWR…YHKQVSLSHV (64 aa)) are cytoplasmic. The short motif at 525–530 (KTLESW) is the Lys-Thr-X-X-X-Trp motif, mediates interaction with the PDZ domain of Dvl family members element. The PDZ-binding signature appears at 583–585 (SHV).

Belongs to the G-protein coupled receptor Fz/Smo family. Binding of unsaturated fatty acid molecules (via FZ domain) promotes homodimerization (via FZ domain). Interacts with WNT2B. Interacts with WNT7A. Interacts with GOPC. Post-translationally, ubiquitinated by RNF43 and ZNRF3, leading to its degradation by the proteasome.

It is found in the cell membrane. The protein localises to the golgi apparatus membrane. Its subcellular location is the synapse. The protein resides in the perikaryon. It localises to the cell projection. It is found in the dendrite. The protein localises to the axon. In terms of biological role, receptor for Wnt proteins. Functions in the canonical Wnt/beta-catenin signaling pathway. In vitro activates WNT2, WNT10B, WNT5A, but not WNT2B or WNT4 signaling. In neurons, activation by WNT7A promotes formation of synapses. May be involved in transduction and intercellular transmission of polarity information during tissue morphogenesis and/or in differentiated tissues. Plays a role in yolk sac angiogenesis and in placental vascularization. Plays a role in ocular development. This is Frizzled-5 (Fzd5) from Rattus norvegicus (Rat).